Consider the following 81-residue polypeptide: MAADGRDGKKIDVDPKLLELLACPLTKGPLAWDPERGELISRVAKLAYPVRDGIPIMLPSEARTLSAEDVLAPPPRLSGPA.

Belongs to the UPF0434 family.

The sequence is that of UPF0434 protein msl4429 from Mesorhizobium japonicum (strain LMG 29417 / CECT 9101 / MAFF 303099) (Mesorhizobium loti (strain MAFF 303099)).